We begin with the raw amino-acid sequence, 515 residues long: Histidine ammonia-lyase (515 aa).

The segment at residues 142–144 (ASG) is a cross-link (5-imidazolinone (Ala-Gly)). S143 bears the 2,3-didehydroalanine (Ser) mark.

Belongs to the PAL/histidase family. Contains an active site 4-methylidene-imidazol-5-one (MIO), which is formed autocatalytically by cyclization and dehydration of residues Ala-Ser-Gly.

It localises to the cytoplasm. The catalysed reaction is L-histidine = trans-urocanate + NH4(+). It participates in amino-acid degradation; L-histidine degradation into L-glutamate; N-formimidoyl-L-glutamate from L-histidine: step 1/3. The protein is Histidine ammonia-lyase of Methylobacterium nodulans (strain LMG 21967 / CNCM I-2342 / ORS 2060).